The primary structure comprises 170 residues: Double homeobox protein 1 (170 aa).

2 consecutive DNA-binding regions (homeobox) follow at residues 19-78 and 94-153; these read GRRM…LRQH and GRRK…RGQS. The disordered stretch occupies residues 75 to 100; it reads LRQHRRQSRPWPGRRDPQKGRRKRTA.

Belongs to the paired homeobox family. Expressed in rhabdomyosarcoma TE671 cells as well as in several other normal and cancer cells.

It localises to the nucleus. In terms of biological role, probable transcription activator. Binds the P5 DNA element sequence 5'-GATCTGAGTCTAATTGAGAATTACTGTAC-3'. The chain is Double homeobox protein 1 (DUX1) from Homo sapiens (Human).